Consider the following 568-residue polypeptide: Tyrosine-protein kinase transforming protein Src (568 aa).

The disordered stretch occupies residues 1 to 58; it reads MGSSKSKPKDPSQRRRSLEPPDSTHHGGFPASQTPNKTAAPDTHRTPSRSFGTVATEP. The N-myristoyl glycine; by host moiety is linked to residue Gly2. Over residues 7-25 the composition is skewed to basic and acidic residues; sequence KPKDPSQRRRSLEPPDSTH. One can recognise an SH3 domain in the interval 81-142; it reads GGVTTFVALY…PSNYVAPSDS (62 aa). An SH2 domain is found at 148–245; that stretch reads WYFGKITRRE…GLCHRLTNVC (98 aa). The region spanning 267-520 is the Protein kinase domain; sequence LRLEVKLGQG…YLQAFLEDYF (254 aa). ATP is bound by residues 273–281 and Lys295; that span reads LGQGCFGEV. Asp386 functions as the Proton acceptor in the catalytic mechanism. Tyr416 carries the phosphotyrosine; by autocatalysis modification.

Belongs to the protein kinase superfamily. Tyr protein kinase family. SRC subfamily. The phosphorylated form is termed pp60v-src.

The catalysed reaction is L-tyrosyl-[protein] + ATP = O-phospho-L-tyrosyl-[protein] + ADP + H(+). This phosphoprotein, required for both the initiation and the maintenance of neoplastic transformation, is a protein kinase that catalyzes the phosphorylation of tyrosine residues in vitro. In Galliformes, this protein is Tyrosine-protein kinase transforming protein Src (V-SRC).